A 50-amino-acid polypeptide reads, in one-letter code: FLGTINLSLCEQERDADEEERRDEPNESNVEVEKRFLSGIVGMLGKLFGK.

Positions 1-10 (FLGTINLSLC) are cleaved as a signal peptide. The propeptide occupies 11–35 (EQERDADEEERRDEPNESNVEVEKR). Position 48 is a phenylalanine amide (F48).

The protein belongs to the frog skin active peptide (FSAP) family. Temporin subfamily. As to expression, expressed by the skin glands.

It is found in the secreted. The protein localises to the target cell membrane. Amphipathic alpha-helical antimicrobial peptide with highly potent activity against Gram-positive bacteria, and potent activity Gram-negative bacteria and fungi (MIC=2-30 uM). Acts through membranolytic mechanism involving rapid membrane permeabilization and depolarization. Shows a direct extra-cellular antiviral activity probably through degradation of the viral envelope. Also shows a weak indirect antiviral activity by inhibiting virus replication. Also displays anti-trypanosoma and anti-leishmania (prosmastigotes and axenic amastigotes) activity through membranolytic mechanism. Also induces apoptosis in leishmania promastigotes at high peptide concentrations. Shows moderate hemolytic activity (LC(50)=25 uM). In contrast to many antibiotics, this peptide does not induce bacterial resistance. The chain is Temporin-SHa from Pelophylax saharicus (Sahara frog).